Here is a 685-residue protein sequence, read N- to C-terminus: E3 ubiquitin ligase Rnf157 (685 aa).

Glycine 2 is lipidated: N-myristoyl glycine. Residues 276–315 (ECVVCLSDVRDTLILPCRHLCLCNTCADTLRYQANNCPIC) form an RING-type zinc finger. Residues 329 to 332 (RKKL) carry the D-box 1 motif. 3 disordered regions span residues 339–361 (SFNPIISSQTSDSEEHSSSENIP), 433–584 (LSKS…AGEQ), and 650–672 (LGGRRPSARPRSPRGGLGKEASA). Over residues 434 to 443 (SKSISQNSSV) the composition is skewed to low complexity. Positions 478–537 (ESENLTLSSSGAVDQSSCTGTPLSSTISSPEDPASSSLAQSVMSMASSQISTDTVSSMSG) are enriched in polar residues. Residues 552–561 (PSPRAASRAP) show a composition bias toward low complexity. A D-box 2 motif is present at residues 657–660 (ARPR).

Interacts with APBB1. Interacts with CHD1; CHD1-binding controls RNF157 stability. Also interacts with ATRN, MEGF8, TECR, MSI2, PLRG1, BYSL, MTERF3, PSMA1, MRPS18B, PRPF4, FASTKD2, SLC25A1, SMU1, CNOT9, MRPS2, MAGT1, FXR2, EMD, PSMD8, HDAC1, RAN, HSD17B12, TXNDC5 and MRPL19.

The protein resides in the cytoplasm. It catalyses the reaction S-ubiquitinyl-[E2 ubiquitin-conjugating enzyme]-L-cysteine + [acceptor protein]-L-lysine = [E2 ubiquitin-conjugating enzyme]-L-cysteine + N(6)-ubiquitinyl-[acceptor protein]-L-lysine.. In terms of biological role, E3 ubiquitin ligase that ubiquitinates APBB1 for its degradation by the proteasome and thus prevents apoptosis and promotes survival of neurons. Has a dual role in neurons as it is also required for dendrite growth and maintenance for which its ligase activity is not critical. May act as a scaffold molecule to regulate this process. Acts as a downstream effector of the interconnected PI3K and MAPK signaling pathways and thus participates in the regulation of the cell cycle. The protein is E3 ubiquitin ligase Rnf157 (Rnf157) of Mus musculus (Mouse).